Reading from the N-terminus, the 154-residue chain is Large ribosomal subunit protein uL13 (154 aa).

This sequence belongs to the universal ribosomal protein uL13 family. As to quaternary structure, part of the 50S ribosomal subunit.

This protein is one of the early assembly proteins of the 50S ribosomal subunit, although it is not seen to bind rRNA by itself. It is important during the early stages of 50S assembly. This chain is Large ribosomal subunit protein uL13, found in Rhodopseudomonas palustris (strain ATCC BAA-98 / CGA009).